A 245-amino-acid chain; its full sequence is Phosducin (245 aa).

Positions 1-14 are enriched in acidic residues; it reads MEEAKSQSLEEDFE. The tract at residues 1 to 68 is disordered; it reads MEEAKSQSLE…RDNKDSKERF (68 aa). In terms of domain architecture, Phosducin spans 1 to 241; that stretch reads MEEAKSQSLE…THALDQTNME (241 aa). A compositionally biased stretch (basic and acidic residues) spans 59–68; that stretch reads RDNKDSKERF. Ser-73 carries the phosphoserine; by PKA modification. The interval 111-245 is thioredoxin fold; it reads YGFVYELETG…DQTNMEEDIE (135 aa).

It belongs to the phosducin family. As to quaternary structure, interacts with CRX. Forms a complex with the beta and gamma subunits of the GTP-binding protein, transducin. In terms of processing, light-induced changes in cyclic nucleotide levels modulate the phosphorylation of this protein by cAMP kinase.

Its subcellular location is the cytoplasm. The protein resides in the cytosol. The protein localises to the nucleus. It is found in the cell projection. It localises to the cilium. Its subcellular location is the photoreceptor outer segment. The protein resides in the photoreceptor inner segment. Inhibits the transcriptional activation activity of the cone-rod homeobox CRX. May participate in the regulation of visual phototransduction or in the integration of photoreceptor metabolism. The polypeptide is Phosducin (PDC) (Felis catus (Cat)).